A 172-amino-acid chain; its full sequence is Adenine phosphoribosyltransferase (172 aa).

It belongs to the purine/pyrimidine phosphoribosyltransferase family. Homodimer.

The protein resides in the cytoplasm. It catalyses the reaction AMP + diphosphate = 5-phospho-alpha-D-ribose 1-diphosphate + adenine. It participates in purine metabolism; AMP biosynthesis via salvage pathway; AMP from adenine: step 1/1. In terms of biological role, catalyzes a salvage reaction resulting in the formation of AMP, that is energically less costly than de novo synthesis. The chain is Adenine phosphoribosyltransferase from Hydrogenovibrio crunogenus (strain DSM 25203 / XCL-2) (Thiomicrospira crunogena).